The sequence spans 252 residues: tRNA (guanine-N(7)-)-methyltransferase (252 aa).

S-adenosyl-L-methionine-binding residues include glutamate 51, aspartate 76, asparagine 103, and aspartate 125. The active site involves aspartate 125. Residues lysine 129, aspartate 159, and 199 to 202 (TYYE) each bind substrate.

Belongs to the class I-like SAM-binding methyltransferase superfamily. TrmB family.

The enzyme catalyses guanosine(46) in tRNA + S-adenosyl-L-methionine = N(7)-methylguanosine(46) in tRNA + S-adenosyl-L-homocysteine. It functions in the pathway tRNA modification; N(7)-methylguanine-tRNA biosynthesis. Catalyzes the formation of N(7)-methylguanine at position 46 (m7G46) in tRNA. The polypeptide is tRNA (guanine-N(7)-)-methyltransferase (Bacteroides fragilis (strain YCH46)).